A 721-amino-acid chain; its full sequence is ATP-dependent zinc metalloprotease FtsH (721 aa).

Residues 1 to 44 are Cytoplasmic-facing; sequence MYFLKKIVNLFSSKIESEDNNVKKDDLTQPRKQSPEARKRRNRR. A helical membrane pass occupies residues 45–65; sequence IIFWLIILLIIGTIIGVIIYF. Over 66–190 the chain is Extracellular; sequence SVRKEYDNVI…AGIPSSGFNP (125 aa). Residues 191-211 traverse the membrane as a helical segment; that stretch reads QVIISPLISIIFFIIFLYIIL. Topologically, residues 212–721 are cytoplasmic; the sequence is RVSKAQSDSL…KDKEKDQKSN (510 aa). 279–286 contacts ATP; that stretch reads GPPGTGKT. Residue His-498 participates in Zn(2+) binding. Glu-499 is a catalytic residue. His-502 and Asp-577 together coordinate Zn(2+). The segment at 686–721 is disordered; the sequence is NKREASQKQANSSVEEAKVVDDEESIKDKEKDQKSN. Residues 700–721 show a composition bias toward basic and acidic residues; sequence EEAKVVDDEESIKDKEKDQKSN.

This sequence in the central section; belongs to the AAA ATPase family. It in the C-terminal section; belongs to the peptidase M41 family. Homohexamer. The cofactor is Zn(2+).

The protein localises to the cell membrane. Its function is as follows. Acts as a processive, ATP-dependent zinc metallopeptidase for both cytoplasmic and membrane proteins. Plays a role in the quality control of integral membrane proteins. This is ATP-dependent zinc metalloprotease FtsH from Ureaplasma parvum serovar 3 (strain ATCC 27815 / 27 / NCTC 11736).